Here is a 141-residue protein sequence, read N- to C-terminus: Lutropin subunit beta (141 aa).

The N-terminal stretch at 1-20 is a signal peptide; sequence MEMLQGLLLWLLLSVGGVWA. 6 disulfide bridges follow: Cys29/Cys77, Cys43/Cys92, Cys46/Cys130, Cys54/Cys108, Cys58/Cys110, and Cys113/Cys120. A glycan (N-linked (GlcNAc...) asparagine) is linked at Asn33.

This sequence belongs to the glycoprotein hormones subunit beta family. In terms of assembly, heterodimer of a common alpha chain and a unique beta chain which confers biological specificity to thyrotropin, lutropin, follitropin and gonadotropin.

It is found in the secreted. In terms of biological role, promotes spermatogenesis and ovulation by stimulating the testes and ovaries to synthesize steroids. This is Lutropin subunit beta (LHB1) from Ceratotherium simum (White rhinoceros).